Here is an 867-residue protein sequence, read N- to C-terminus: E3 ubiquitin-protein ligase SH3RF1 (867 aa).

Residues 12–53 form an RING-type zinc finger; sequence CPVCLERLDATAKVLPCQHTFCRRCLLGIVGSRGELRCPECR. Positions 101-127 are disordered; sequence AQGAGGSQRDPGPTGGQSQRVQAKSTP. Over residues 116 to 125 the composition is skewed to polar residues; the sequence is GQSQRVQAKS. SH3 domains lie at 132-191 and 194-257; these read PQLP…VIKP and QPPP…FNSA. The segment at 265–328 is disordered; sequence DKPSEGGGDS…PPPQRHSMEI (64 aa). Low complexity predominate over residues 275-285; it reads SEGPSSSSSGP. Residues 436–497 enclose the SH3 3 domain; sequence QRPTVYVAMF…PGNYMSPVSR (62 aa). The tract at residues 706-794 is disordered; sequence LSNKKKLRPS…APIAPPPRQP (89 aa). The segment covering 760–769 has biased composition (low complexity); the sequence is SELSMSSSSS. Over residues 770–784 the composition is skewed to polar residues; it reads NTDAVTHRSSPQDNT. The SH3 4 domain maps to 808 to 867; it reads IVCERYRVVVSYPPQSEAELELKEGDIVFVHKKREDGWFKGTLQRNGRTGLFPGSFVDSI.

This sequence belongs to the SH3RF family. Autoubiquitinated. Ubiquitinated by SH3RF2, leading to proteasome-mediated degradation.

The protein localises to the cytoplasm. The protein resides in the perinuclear region. Its subcellular location is the cell projection. It is found in the lamellipodium. It localises to the golgi apparatus. The protein localises to the trans-Golgi network. It catalyses the reaction S-ubiquitinyl-[E2 ubiquitin-conjugating enzyme]-L-cysteine + [acceptor protein]-L-lysine = [E2 ubiquitin-conjugating enzyme]-L-cysteine + N(6)-ubiquitinyl-[acceptor protein]-L-lysine.. Its pathway is protein modification; protein ubiquitination. Its function is as follows. Has E3 ubiquitin-protein ligase activity. In the absence of an external substrate, it can catalyze self-ubiquitination. Acts as a scaffold protein that contributes to the effective activation of the JNK signaling pathway. This chain is E3 ubiquitin-protein ligase SH3RF1 (sh3rf1), found in Danio rerio (Zebrafish).